The following is a 142-amino-acid chain: Hemoglobin subunit alpha (142 aa).

The region spanning valine 2–arginine 142 is the Globin domain. Serine 4 carries the post-translational modification Phosphoserine. N6-succinyllysine is present on residues lysine 8 and lysine 12. The residue at position 17 (lysine 17) is an N6-acetyllysine; alternate. N6-succinyllysine; alternate is present on lysine 17. Tyrosine 25 is subject to Phosphotyrosine. Serine 36 carries the phosphoserine modification. The residue at position 41 (lysine 41) is an N6-succinyllysine. Serine 50 carries the post-translational modification Phosphoserine. O2 is bound at residue histidine 59. Residue histidine 88 coordinates heme b. Threonine 109 bears the Phosphothreonine mark. 2 positions are modified to phosphoserine: serine 125 and serine 132. Phosphothreonine occurs at positions 135 and 138. Residue serine 139 is modified to Phosphoserine.

The protein belongs to the globin family. Heterotetramer of two alpha chains and two beta chains. Red blood cells.

Involved in oxygen transport from the lung to the various peripheral tissues. Functionally, hemopressin acts as an antagonist peptide of the cannabinoid receptor CNR1. Hemopressin-binding efficiently blocks cannabinoid receptor CNR1 and subsequent signaling. The sequence is that of Hemoglobin subunit alpha (HBA) from Cavia porcellus (Guinea pig).